A 318-amino-acid chain; its full sequence is Small ribosomal subunit protein mS26 (318 aa).

The disordered stretch occupies residues Ile295 to Leu318. The span at Asn300–Leu318 shows a compositional bias: low complexity.

The protein belongs to the mitochondrion-specific ribosomal protein mS26 family. Component of the mitochondrial small ribosomal subunit (mt-SSU). Mature yeast 74S mitochondrial ribosomes consist of a small (37S) and a large (54S) subunit. The 37S small subunit contains a 15S ribosomal RNA (15S mt-rRNA) and 34 different proteins. The 54S large subunit contains a 21S rRNA (21S mt-rRNA) and 46 different proteins.

It localises to the mitochondrion. Component of the mitochondrial ribosome (mitoribosome), a dedicated translation machinery responsible for the synthesis of mitochondrial genome-encoded proteins, including at least some of the essential transmembrane subunits of the mitochondrial respiratory chain. The mitoribosomes are attached to the mitochondrial inner membrane and translation products are cotranslationally integrated into the membrane. The sequence is that of Small ribosomal subunit protein mS26 (PET123) from Saccharomyces cerevisiae (strain ATCC 204508 / S288c) (Baker's yeast).